The sequence spans 131 residues: MRHRKSGRQLNRNASHRKAMFKNMANSLFLYKTIRTTLPKAKELRRVVEPLITKAKIDSVANRRNAFSKLRDSAIVAKLFTELAPFYKDRPGGYIRILKAGFRTGDKAAMAIVQLIDLETMTDTTAGTTTS.

This sequence belongs to the bacterial ribosomal protein bL17 family. Part of the 50S ribosomal subunit. Contacts protein L32.

This chain is Large ribosomal subunit protein bL17, found in Vesicomyosocius okutanii subsp. Calyptogena okutanii (strain HA).